Here is a 332-residue protein sequence, read N- to C-terminus: L-lactate dehydrogenase A chain (332 aa).

NAD(+) is bound by residues 29–57 (GAVGMACAISILMKDLADELALVDVVEDK) and R99. Substrate-binding residues include R106, N138, and R169. N138 contacts NAD(+). The active-site Proton acceptor is H193. A substrate-binding site is contributed by T248.

It belongs to the LDH/MDH superfamily. LDH family. In terms of assembly, homotetramer.

The protein resides in the cytoplasm. The catalysed reaction is (S)-lactate + NAD(+) = pyruvate + NADH + H(+). It functions in the pathway fermentation; pyruvate fermentation to lactate; (S)-lactate from pyruvate: step 1/1. Its function is as follows. Interconverts simultaneously and stereospecifically pyruvate and lactate with concomitant interconversion of NADH and NAD(+). The polypeptide is L-lactate dehydrogenase A chain (LDHA) (Python regius (Ball python)).